The chain runs to 211 residues: Large ribosomal subunit protein uL3 (211 aa).

Gln150 is subject to N5-methylglutamine.

Belongs to the universal ribosomal protein uL3 family. In terms of assembly, part of the 50S ribosomal subunit. Forms a cluster with proteins L14 and L19. Methylated by PrmB.

Functionally, one of the primary rRNA binding proteins, it binds directly near the 3'-end of the 23S rRNA, where it nucleates assembly of the 50S subunit. The sequence is that of Large ribosomal subunit protein uL3 from Pseudomonas fluorescens (strain ATCC BAA-477 / NRRL B-23932 / Pf-5).